The chain runs to 257 residues: Thiazole synthase (257 aa).

Catalysis depends on K98, which acts as the Schiff-base intermediate with DXP. Residues G159, 185-186 (AG), and 207-208 (NT) contribute to the 1-deoxy-D-xylulose 5-phosphate site.

This sequence belongs to the ThiG family. Homotetramer. Forms heterodimers with either ThiH or ThiS.

It is found in the cytoplasm. The enzyme catalyses [ThiS sulfur-carrier protein]-C-terminal-Gly-aminoethanethioate + 2-iminoacetate + 1-deoxy-D-xylulose 5-phosphate = [ThiS sulfur-carrier protein]-C-terminal Gly-Gly + 2-[(2R,5Z)-2-carboxy-4-methylthiazol-5(2H)-ylidene]ethyl phosphate + 2 H2O + H(+). It functions in the pathway cofactor biosynthesis; thiamine diphosphate biosynthesis. Catalyzes the rearrangement of 1-deoxy-D-xylulose 5-phosphate (DXP) to produce the thiazole phosphate moiety of thiamine. Sulfur is provided by the thiocarboxylate moiety of the carrier protein ThiS. In vitro, sulfur can be provided by H(2)S. The sequence is that of Thiazole synthase from Anaeromyxobacter sp. (strain Fw109-5).